Reading from the N-terminus, the 431-residue chain is C4-dicarboxylate transport protein (431 aa).

The next 8 membrane-spanning stretches (helical) occupy residues 8-28, 44-64, 78-98, 148-168, 188-208, 222-242, 307-327, and 355-375; these read ILYVQVLFAIFVGILLGHFWP, LIKMIIGPIIFCTVVTGIAGM, LLYFEIVSTFALLIGLGAAHL, GDILQILLVSLFFGAALAAIG, IVHVITKVAPIGAFGAMAFTI, LIGTFYFTAIVFVVFVLGAIA, IYMTMAVIFIAQATGIELTLL, and AATLAVVPTIPVAGMVLILGI.

Belongs to the dicarboxylate/amino acid:cation symporter (DAACS) (TC 2.A.23) family.

It localises to the cell inner membrane. Functionally, responsible for the transport of dicarboxylates such as succinate, fumarate, and malate from the periplasm across the membrane. The sequence is that of C4-dicarboxylate transport protein from Cupriavidus pinatubonensis (strain JMP 134 / LMG 1197) (Cupriavidus necator (strain JMP 134)).